The following is a 251-amino-acid chain: Ubiquinone/menaquinone biosynthesis C-methyltransferase UbiE (251 aa).

S-adenosyl-L-methionine is bound by residues Thr-74, Asp-95, 123–124 (NA), and Ser-140.

Belongs to the class I-like SAM-binding methyltransferase superfamily. MenG/UbiE family.

It carries out the reaction a 2-demethylmenaquinol + S-adenosyl-L-methionine = a menaquinol + S-adenosyl-L-homocysteine + H(+). The catalysed reaction is a 2-methoxy-6-(all-trans-polyprenyl)benzene-1,4-diol + S-adenosyl-L-methionine = a 5-methoxy-2-methyl-3-(all-trans-polyprenyl)benzene-1,4-diol + S-adenosyl-L-homocysteine + H(+). It functions in the pathway quinol/quinone metabolism; menaquinone biosynthesis; menaquinol from 1,4-dihydroxy-2-naphthoate: step 2/2. Its pathway is cofactor biosynthesis; ubiquinone biosynthesis. Functionally, methyltransferase required for the conversion of demethylmenaquinol (DMKH2) to menaquinol (MKH2) and the conversion of 2-polyprenyl-6-methoxy-1,4-benzoquinol (DDMQH2) to 2-polyprenyl-3-methyl-6-methoxy-1,4-benzoquinol (DMQH2). The chain is Ubiquinone/menaquinone biosynthesis C-methyltransferase UbiE from Serratia proteamaculans (strain 568).